The primary structure comprises 217 residues: Thiopurine S-methyltransferase (217 aa).

The S-adenosyl-L-methionine site is built by W11, L46, E67, and R122.

Belongs to the class I-like SAM-binding methyltransferase superfamily. TPMT family.

It is found in the cytoplasm. The enzyme catalyses S-adenosyl-L-methionine + a thiopurine = S-adenosyl-L-homocysteine + a thiopurine S-methylether.. The chain is Thiopurine S-methyltransferase from Vibrio vulnificus (strain YJ016).